The sequence spans 322 residues: Sideroflexin-1 (322 aa).

Serine 2 is subject to N-acetylserine. Residues 2 to 102 lie on the Mitochondrial matrix side of the membrane; the sequence is SGELPPNINI…MSAQVPMNMT (101 aa). A helical membrane pass occupies residues 103-120; the sequence is ITGCMMTFYRTTPAVLFW. Over 121–146 the chain is Mitochondrial intermembrane; that stretch reads QWINQSFNAVVNYTNRSGDAPLTVNE. The chain crosses the membrane as a helical span at residues 147-167; sequence LGTAYVSATTGAVATALGLNA. Residues 168-174 are Mitochondrial matrix-facing; sequence LTKHVSP. Residues 175–195 form a helical membrane-spanning segment; it reads LIGRFVPFAAVAAANCINIPL. The Mitochondrial intermembrane segment spans residues 196–228; sequence MRQRELKVGIPVTDENGNRLGESANAAKQAITQ. The chain crosses the membrane as a helical span at residues 229–249; it reads VVVSRILMAAPGMAIPPFIMN. Over 250-266 the chain is Mitochondrial matrix; the sequence is TLEKKAFLKRFPWMSAP. A helical membrane pass occupies residues 267-287; that stretch reads VQVGIVGFCLVFATPLCCALF. The Mitochondrial intermembrane segment spans residues 288 to 322; the sequence is PQKSSMSVTSLEAELQARIRETYPELRRVYFNKGL.

It belongs to the sideroflexin family.

It localises to the mitochondrion inner membrane. The enzyme catalyses L-serine(in) = L-serine(out). It carries out the reaction L-alanine(in) = L-alanine(out). It catalyses the reaction L-cysteine(in) = L-cysteine(out). Functionally, amino acid transporter importing serine, an essential substrate of the mitochondrial branch of the one-carbon pathway, into mitochondria. Mitochondrial serine is then converted to glycine and formate, which exits to the cytosol where it is used to generate the charged folates that serve as one-carbon donors. May also transport other amino acids including alanine and cysteine. This chain is Sideroflexin-1 (SFXN1), found in Bos taurus (Bovine).